The following is a 96-amino-acid chain: Cell division topological specificity factor (96 aa).

This sequence belongs to the MinE family.

In terms of biological role, prevents the cell division inhibition by proteins MinC and MinD at internal division sites while permitting inhibition at polar sites. This ensures cell division at the proper site by restricting the formation of a division septum at the midpoint of the long axis of the cell. The protein is Cell division topological specificity factor of Nitrosococcus oceani (strain ATCC 19707 / BCRC 17464 / JCM 30415 / NCIMB 11848 / C-107).